The chain runs to 449 residues: Wilms tumor protein homolog (449 aa).

Residues 48–84 form a disordered region; sequence YGSLGGPAPPPAPPPPPPPPPHSFIKQEPSWGGAEPH. Positions 54-69 are enriched in pro residues; that stretch reads PAPPPAPPPPPPPPPH. Glycyl lysine isopeptide (Lys-Gly) (interchain with G-Cter in SUMO) cross-links involve residues Lys73 and Lys177. Residues 236-244 carry the 9aaTAD motif; it reads MTWNQMNLG. C2H2-type zinc fingers lie at residues 323-347, 353-377, and 383-405; these read FMCAYPGCNKRYFKLSHLQMHSRKH, YQCDFKDCERRFSRSDQLKRHQRRH, and FQCKTCQRKFSRSDHLKTHTRTH. 2 important for interaction with target DNA regions span residues 367–381 and 393–401; these read SDQLKRHQRRHTGVK and SRSDHLKTH. Residues 408 to 410 carry the KTS motif motif; the sequence is KTS. Residues 414 to 438 form a C2H2-type 4 zinc finger; the sequence is FSCRWPSCQKKFARSDELVRHHNMH. Lys444 is covalently cross-linked (Glycyl lysine isopeptide (Lys-Gly) (interchain with G-Cter in SUMO2)).

This sequence belongs to the EGR C2H2-type zinc-finger protein family. Interacts with ZNF224 via the zinc-finger region. Interacts with WTAP, AMER1 and SRY. Homodimer. Interacts with WTIP. Interacts with actively translating polysomes. Detected in nuclear ribonucleoprotein (mRNP) particles. Interacts with U2AF2. Interacts with HNRNPU via the zinc-finger region. Interacts with CITED2. Interacts with RBM4.

The protein resides in the nucleus speckle. Its subcellular location is the nucleus. The protein localises to the nucleoplasm. It localises to the nucleolus. It is found in the cytoplasm. Its function is as follows. Transcription factor that plays an important role in cellular development and cell survival. Recognizes and binds to the DNA sequence 5'-GCG(T/G)GGGCG-3'. Regulates the expression of numerous target genes, including EPO. Plays an essential role for development of the urogenital system. It has a tumor suppressor as well as an oncogenic role in tumor formation. Function may be isoform-specific: isoforms lacking the KTS motif may act as transcription factors. Isoforms containing the KTS motif may bind mRNA and play a role in mRNA metabolism or splicing. Isoform 1 has lower affinity for DNA, and can bind RNA. In Sus scrofa (Pig), this protein is Wilms tumor protein homolog (WT1).